The primary structure comprises 644 residues: Pesticidal crystal protein Cry3Aa (644 aa).

The segment covering 1 to 13 has biased composition (basic and acidic residues); it reads MNPNNRSEHDTIK. Residues 1–20 are disordered; that stretch reads MNPNNRSEHDTIKTTENNEV. The propeptide at 1–57 is removed in mature form; that stretch reads MNPNNRSEHDTIKTTENNEVPTNHVQYPLAETPNPTLEDLNYKEFLRMTADNNTEAL.

Belongs to the delta endotoxin family.

Functionally, promotes colloidosmotic lysis by binding to the midgut epithelial cells of Coleoptera. The chain is Pesticidal crystal protein Cry3Aa (cry3Aa) from Bacillus thuringiensis subsp. san diego.